Reading from the N-terminus, the 504-residue chain is Anaerobic nitric oxide reductase transcription regulator NorR (504 aa).

D57 carries the post-translational modification 4-aspartylphosphate. Residues M187–V416 enclose the Sigma-54 factor interaction domain. Residues G215–E222 and A278–E287 contribute to the ATP site. The segment at residues W479 to K498 is a DNA-binding region (H-T-H motif).

It participates in nitrogen metabolism; nitric oxide reduction. In terms of biological role, required for the expression of anaerobic nitric oxide (NO) reductase, acts as a transcriptional activator for at least the norVW operon. Activation also requires sigma-54. This Escherichia coli O127:H6 (strain E2348/69 / EPEC) protein is Anaerobic nitric oxide reductase transcription regulator NorR.